A 1416-amino-acid chain; its full sequence is Phospholipid-transporting ATPase VD (1416 aa).

Residues 1 to 97 (MTELLQWARH…PRNLFEQFHR (97 aa)) are Cytoplasmic-facing. A helical membrane pass occupies residues 98–118 (AANLYFLFLVVLNWVPLVEAF). The Exoplasmic loop segment spans residues 119–120 (QK). The chain crosses the membrane as a helical span at residues 121 to 141 (EITMLPLVVVLTIIAIKDGLE). Topologically, residues 142–321 (DYRKYKIDKQ…SKLERRANTD (180 aa)) are cytoplasmic. A helical transmembrane segment spans residues 322-342 (VLWCVLLLIVMCLTGALGHGI). At 343 to 365 (WLSRYENMLFFNIPEPDGRVISP) the chain is on the exoplasmic loop side. A helical membrane pass occupies residues 366–386 (VLTGFYVFWTMIILLQVLIPI). Over 387–1110 (SLYVSIEIVK…HWCYTRLSNM (724 aa)) the chain is Cytoplasmic. Asp-438 acts as the 4-aspartylphosphate intermediate in catalysis. Residues Asp-438, Lys-439, and Thr-440 each contribute to the ATP site. A Mg(2+)-binding site is contributed by Asp-438. Thr-440 contributes to the Mg(2+) binding site. The segment at 498 to 544 (AQGCRTVPSGPLGKPSAQLSGSTSAVGNGEGSGEVPHSRQAAFSSPM) is disordered. Residues 514 to 523 (AQLSGSTSAV) are compositionally biased toward polar residues. Residues Glu-729, Phe-771, Lys-795, Arg-838, Thr-918, Gly-919, and Asp-920 each contribute to the ATP site. A disordered region spans residues 971–990 (PELASSRKNFPQPSDAQGQG). The span at 976-987 (SRKNFPQPSDAQ) shows a compositional bias: polar residues. Residues 993 to 1000 (GLVITGKT), Arg-1027, and Lys-1033 each bind ATP. Mg(2+) is bound at residue Asp-1053. Residues Asn-1056 and Asp-1057 each contribute to the ATP site. A Mg(2+)-binding site is contributed by Asp-1057. Residues 1111–1131 (ILYFFYKNVAYVNLLFWYQFF) form a helical membrane-spanning segment. At 1132-1142 (CGFSGTSMTDY) the chain is on the exoplasmic loop side. A helical membrane pass occupies residues 1143–1163 (WVLIFFNLLFTSVPPIIYGVL). Over 1164 to 1192 (EKDVSAETLLQLPELYRSGQRSEEYLPLT) the chain is Cytoplasmic. A helical transmembrane segment spans residues 1193 to 1213 (FWITLLDAFYQSLVCFFVPYF). Topologically, residues 1214-1221 (TYQGSDID) are exoplasmic loop. A helical transmembrane segment spans residues 1222 to 1242 (IFTFGNPLNTAALFIILLHLV). Over 1243–1252 (IESKSLTWIH) the chain is Cytoplasmic. A helical transmembrane segment spans residues 1253–1273 (MLVTVGSILSYFFFALAFGAL). The Exoplasmic loop segment spans residues 1274–1289 (CVTCNPPSNPYGIMRK). A helical transmembrane segment spans residues 1290–1310 (HMLDPVFYLVCVLTTFVALLP). The Cytoplasmic segment spans residues 1311 to 1416 (RFLYRVLQGS…ASKMTGSSAS (106 aa)). Positions 1358 to 1416 (SKHASQSAAMSGRPTPGSSAVLAMKSATVSTVEQSTRETALDRGCSEPGASKMTGSSAS) are disordered. 1361–1368 (ASQSAAMS) lines the ATP pocket. Residues 1392-1402 (STRETALDRGC) are compositionally biased toward basic and acidic residues.

The protein belongs to the cation transport ATPase (P-type) (TC 3.A.3) family. Type IV subfamily. As to quaternary structure, component of a P4-ATPase flippase complex which consists of a catalytic alpha subunit ATP10A and an accessory beta subunit TMEM30A. It depends on Mg(2+) as a cofactor. Post-translationally, autophosphorylated at the conserved aspartate of the P-type ATPase signature sequence. In terms of tissue distribution, expressed at low amounts in liver, brain, testes, and kidney (at protein level). Expressed in placenta.

The protein localises to the cell membrane. The protein resides in the endoplasmic reticulum membrane. It carries out the reaction ATP + H2O + phospholipidSide 1 = ADP + phosphate + phospholipidSide 2.. It catalyses the reaction a beta-D-glucosyl-(1&lt;-&gt;1')-N-acylsphing-4-enine(out) + ATP + H2O = a beta-D-glucosyl-(1&lt;-&gt;1')-N-acylsphing-4-enine(in) + ADP + phosphate + H(+). In terms of biological role, catalytic component of a P4-ATPase flippase complex, which catalyzes the hydrolysis of ATP coupled to the transport of glucosylceramide (GlcCer) from the outer to the inner leaflet of the plasma membrane. The sequence is that of Phospholipid-transporting ATPase VD (Atp10d) from Mus musculus (Mouse).